The following is a 401-amino-acid chain: Argininosuccinate synthase (401 aa).

8–16 is a binding site for ATP; the sequence is AYSGGLDTS. Residue Tyr87 coordinates L-citrulline. Gly117 is a binding site for ATP. Residues Thr119, Asn123, and Asp124 each coordinate L-aspartate. L-citrulline is bound at residue Asn123. L-citrulline contacts are provided by Arg127, Ser175, Glu259, and Tyr271.

It belongs to the argininosuccinate synthase family. Type 1 subfamily. As to quaternary structure, homotetramer.

The protein localises to the cytoplasm. The enzyme catalyses L-citrulline + L-aspartate + ATP = 2-(N(omega)-L-arginino)succinate + AMP + diphosphate + H(+). Its pathway is amino-acid biosynthesis; L-arginine biosynthesis; L-arginine from L-ornithine and carbamoyl phosphate: step 2/3. The polypeptide is Argininosuccinate synthase (Corynebacterium efficiens (strain DSM 44549 / YS-314 / AJ 12310 / JCM 11189 / NBRC 100395)).